Reading from the N-terminus, the 660-residue chain is Bifunctional polymyxin resistance protein ArnA (660 aa).

Residues 1–304 (MKTVVFAYHD…TLGLVQGSRL (304 aa)) are formyltransferase ArnAFT. (6R)-10-formyltetrahydrofolate is bound at residue 86–88 (HLI). Catalysis depends on histidine 104, which acts as the Proton donor; for formyltransferase activity. (6R)-10-formyltetrahydrofolate is bound by residues arginine 114 and 136–140 (VKRAD). The dehydrogenase ArnADH stretch occupies residues 314-660 (RRTRVLILGV…RTVDLTDKPS (347 aa)). NAD(+) contacts are provided by residues aspartate 347 and 368–369 (DI). UDP-alpha-D-glucuronate-binding positions include alanine 393, tyrosine 398, and 432-433 (TS). The Proton acceptor; for decarboxylase activity role is filled by glutamate 434. UDP-alpha-D-glucuronate is bound by residues arginine 460, asparagine 492, 526–535 (KLIDGGKQKR), and tyrosine 613. The Proton donor; for decarboxylase activity role is filled by arginine 619.

In the N-terminal section; belongs to the Fmt family. UDP-L-Ara4N formyltransferase subfamily. This sequence in the C-terminal section; belongs to the NAD(P)-dependent epimerase/dehydratase family. UDP-glucuronic acid decarboxylase subfamily. As to quaternary structure, homohexamer, formed by a dimer of trimers.

The catalysed reaction is UDP-alpha-D-glucuronate + NAD(+) = UDP-beta-L-threo-pentopyranos-4-ulose + CO2 + NADH. It carries out the reaction UDP-4-amino-4-deoxy-beta-L-arabinose + (6R)-10-formyltetrahydrofolate = UDP-4-deoxy-4-formamido-beta-L-arabinose + (6S)-5,6,7,8-tetrahydrofolate + H(+). The protein operates within nucleotide-sugar biosynthesis; UDP-4-deoxy-4-formamido-beta-L-arabinose biosynthesis; UDP-4-deoxy-4-formamido-beta-L-arabinose from UDP-alpha-D-glucuronate: step 1/3. It participates in nucleotide-sugar biosynthesis; UDP-4-deoxy-4-formamido-beta-L-arabinose biosynthesis; UDP-4-deoxy-4-formamido-beta-L-arabinose from UDP-alpha-D-glucuronate: step 3/3. Its pathway is bacterial outer membrane biogenesis; lipopolysaccharide biosynthesis. Bifunctional enzyme that catalyzes the oxidative decarboxylation of UDP-glucuronic acid (UDP-GlcUA) to UDP-4-keto-arabinose (UDP-Ara4O) and the addition of a formyl group to UDP-4-amino-4-deoxy-L-arabinose (UDP-L-Ara4N) to form UDP-L-4-formamido-arabinose (UDP-L-Ara4FN). The modified arabinose is attached to lipid A and is required for resistance to polymyxin and cationic antimicrobial peptides. The sequence is that of Bifunctional polymyxin resistance protein ArnA from Escherichia coli O81 (strain ED1a).